A 1105-amino-acid polypeptide reads, in one-letter code: Serine/threonine-protein kinase 4 homolog B (1105 aa).

A Protein kinase domain is found at 23-274 (FDLIECLGRG…AKDLLKHSFF (252 aa)). ATP-binding positions include 29–37 (LGRGSFGSV) and K52. The active-site Proton acceptor is D142. 3 disordered regions span residues 348–396 (STQI…TKNN), 411–482 (SSSA…RQPA), and 495–541 (PSFG…SLPL). 2 stretches are compositionally biased toward low complexity: residues 358–396 (QAQQ…TKNN) and 411–437 (SSSA…TTTN). The segment covering 438–458 (DYHTGNGRTSSSSPQFGLQHQ) has biased composition (polar residues). 2 stretches are compositionally biased toward low complexity: residues 459–473 (NSSN…TVPS) and 513–541 (PIGS…SLPL). The segment at 516–1105 (SPITKRPTPT…SEFDLDFYNN (590 aa)) is calpain-like cysteine protease-like. 4 domain III regions span residues 641 to 668 (EVSA…EGSF), 791 to 830 (VHTQ…QGSI), 836 to 972 (SEQI…NVIQ), and 1076 to 1103 (VVIP…LDFY).

In the N-terminal section; belongs to the protein kinase superfamily. STE Ser/Thr protein kinase family. STE20 subfamily. The protein in the C-terminal section; belongs to the peptidase C2 family. It depends on Mn(2+) as a cofactor.

It carries out the reaction L-seryl-[protein] + ATP = O-phospho-L-seryl-[protein] + ADP + H(+). It catalyses the reaction L-threonyl-[protein] + ATP = O-phospho-L-threonyl-[protein] + ADP + H(+). Functionally, probable serine/threonine-protein kinase. This chain is Serine/threonine-protein kinase 4 homolog B (krsB), found in Dictyostelium discoideum (Social amoeba).